Here is an 82-residue protein sequence, read N- to C-terminus: ATP synthase subunit c, chloroplastic (82 aa).

2 helical membrane passes run I4–P24 and L57–A77.

This sequence belongs to the ATPase C chain family. In terms of assembly, F-type ATPases have 2 components, F(1) - the catalytic core - and F(0) - the membrane proton channel. F(1) has five subunits: alpha(3), beta(3), gamma(1), delta(1), epsilon(1). F(0) has four main subunits: a(1), b(1), b'(1) and c(10-14). The alpha and beta chains form an alternating ring which encloses part of the gamma chain. F(1) is attached to F(0) by a central stalk formed by the gamma and epsilon chains, while a peripheral stalk is formed by the delta, b and b' chains.

It is found in the plastid. The protein resides in the chloroplast thylakoid membrane. In terms of biological role, f(1)F(0) ATP synthase produces ATP from ADP in the presence of a proton or sodium gradient. F-type ATPases consist of two structural domains, F(1) containing the extramembraneous catalytic core and F(0) containing the membrane proton channel, linked together by a central stalk and a peripheral stalk. During catalysis, ATP synthesis in the catalytic domain of F(1) is coupled via a rotary mechanism of the central stalk subunits to proton translocation. Functionally, key component of the F(0) channel; it plays a direct role in translocation across the membrane. A homomeric c-ring of between 10-14 subunits forms the central stalk rotor element with the F(1) delta and epsilon subunits. This is ATP synthase subunit c, chloroplastic from Heterosigma akashiwo (strain NIES-293 / 8280G21-1).